The sequence spans 956 residues: Phosphatidylinositol 4-kinase PIK1a (956 aa).

In terms of domain architecture, PIK helical spans 1-120 (MPVAPHELRD…QTVRKFINKL (120 aa)). Residues 545-573 (SRDWAKSTPGSPVARSSQEDEKFYGNVSS) form a disordered region. Residues 658-939 (EDWNEKKHRI…YLIEKSVGSM (282 aa)) form the PI3K/PI4K catalytic domain. A G-loop region spans residues 664–670 (KHRIRKS). The segment at 805-813 (QIKDRHNGN) is catalytic loop. Residues 824–848 (HIDFGFLLSNSPGSVGFEAAPFKLT) are activation loop.

This sequence belongs to the PI3/PI4-kinase family. Type III PI4K subfamily.

The protein resides in the nucleus. It carries out the reaction a 1,2-diacyl-sn-glycero-3-phospho-(1D-myo-inositol) + ATP = a 1,2-diacyl-sn-glycero-3-phospho-(1D-myo-inositol 4-phosphate) + ADP + H(+). In terms of biological role, acts on phosphatidylinositol (PI) in the first committed step in the production of the second messenger inositol 1,4,5,-trisphosphate. The polypeptide is Phosphatidylinositol 4-kinase PIK1a (PIKA) (Candida albicans (strain SC5314 / ATCC MYA-2876) (Yeast)).